The following is a 202-amino-acid chain: Acireductone dioxygenase (202 aa).

Residues histidine 110, histidine 112, glutamate 116, and histidine 154 each coordinate Fe(2+). Positions 110, 112, 116, and 154 each coordinate Ni(2+).

The protein belongs to the acireductone dioxygenase (ARD) family. In terms of assembly, monomer. The cofactor is Fe(2+). Ni(2+) serves as cofactor.

The catalysed reaction is 1,2-dihydroxy-5-(methylsulfanyl)pent-1-en-3-one + O2 = 3-(methylsulfanyl)propanoate + CO + formate + 2 H(+). The enzyme catalyses 1,2-dihydroxy-5-(methylsulfanyl)pent-1-en-3-one + O2 = 4-methylsulfanyl-2-oxobutanoate + formate + 2 H(+). Its pathway is amino-acid biosynthesis; L-methionine biosynthesis via salvage pathway; L-methionine from S-methyl-5-thio-alpha-D-ribose 1-phosphate: step 5/6. Catalyzes 2 different reactions between oxygen and the acireductone 1,2-dihydroxy-3-keto-5-methylthiopentene (DHK-MTPene) depending upon the metal bound in the active site. Fe-containing acireductone dioxygenase (Fe-ARD) produces formate and 2-keto-4-methylthiobutyrate (KMTB), the alpha-ketoacid precursor of methionine in the methionine recycle pathway. Ni-containing acireductone dioxygenase (Ni-ARD) produces methylthiopropionate, carbon monoxide and formate, and does not lie on the methionine recycle pathway. The chain is Acireductone dioxygenase from Synechococcus sp. (strain CC9311).